A 292-amino-acid chain; its full sequence is 3-methyl-2-oxobutanoate hydroxymethyltransferase 2 (292 aa).

Positions 52 and 91 each coordinate Mg(2+). 3-methyl-2-oxobutanoate is bound by residues 52 to 53, D91, and K120; that span reads DS. E122 is a binding site for Mg(2+). The Proton acceptor role is filled by E189.

It belongs to the PanB family. In terms of assembly, homodecamer; pentamer of dimers. It depends on Mg(2+) as a cofactor.

It is found in the cytoplasm. The catalysed reaction is 3-methyl-2-oxobutanoate + (6R)-5,10-methylene-5,6,7,8-tetrahydrofolate + H2O = 2-dehydropantoate + (6S)-5,6,7,8-tetrahydrofolate. The protein operates within cofactor biosynthesis; (R)-pantothenate biosynthesis; (R)-pantoate from 3-methyl-2-oxobutanoate: step 1/2. Catalyzes the reversible reaction in which hydroxymethyl group from 5,10-methylenetetrahydrofolate is transferred onto alpha-ketoisovalerate to form ketopantoate. The chain is 3-methyl-2-oxobutanoate hydroxymethyltransferase 2 from Bradyrhizobium diazoefficiens (strain JCM 10833 / BCRC 13528 / IAM 13628 / NBRC 14792 / USDA 110).